Reading from the N-terminus, the 429-residue chain is Small ribosomal subunit protein mS47 (429 aa).

Positions 141, 166, 189, and 197 each coordinate substrate.

It belongs to the enoyl-CoA hydratase/isomerase family. Mitochondrion-specific ribosomal protein mS47 subfamily. Component of the mitochondrial small ribosomal subunit (mt-SSU). Mature yeast 74S mitochondrial ribosomes consist of a small (37S) and a large (54S) subunit. The 37S small subunit contains a 15S ribosomal RNA (15S mt-rRNA) and at least 32 different proteins. The 54S large subunit contains a 21S rRNA (21S mt-rRNA) and at least 45 different proteins. mS47/snr1 forms a protuberance of the yeast mitoribosome and retains a solvent-exposed cavity likely capable of accommodating a substrate, in accordance with it being an active enzyme as well as an integral constituent of the mitoribosome.

It is found in the mitochondrion. It carries out the reaction 3-hydroxy-2-methylpropanoyl-CoA + H2O = 3-hydroxy-2-methylpropanoate + CoA + H(+). It functions in the pathway amino-acid degradation; L-valine degradation. Functionally, component of the mitochondrial ribosome (mitoribosome), a dedicated translation machinery responsible for the synthesis of mitochondrial genome-encoded proteins, including at least some of the essential transmembrane subunits of the mitochondrial respiratory chain. The mitoribosomes are attached to the mitochondrial inner membrane and translation products are cotranslationally integrated into the membrane. mS47/snr1 has enzymatic activity in vitro, and is able to catalyze the specific hydrolysis of 3-hydroxyisobutyryl-CoA (HIBYL-CoA). However, because the turnover rate of mS47/snr1 is only a fraction of that of the homologous mammalian enzyme, the physiological function of this activity remains unclear. Has an indirect role in endocytic membrane trafficking. The sequence is that of Small ribosomal subunit protein mS47 (snr1) from Schizosaccharomyces pombe (strain 972 / ATCC 24843) (Fission yeast).